Here is a 222-residue protein sequence, read N- to C-terminus: Gamma-glutamylcyclotransferase and putative RNase MJ0434 (222 aa).

Arg75 is a catalytic residue. Residues Arg75–Tyr82 carry the RX(4)HXY motif motif. The residue at position 82 (Tyr82) is an O-di-AMP-tyrosine.

In the N-terminal section; belongs to the HepT RNase toxin family. This sequence in the C-terminal section; belongs to the gamma-glutamylcyclotransferase family. As to quaternary structure, homodimer, probably forms a complex with cognate antitoxin MJ0435. Post-translationally, modified by cognate antitoxin MJ0435; probably at least 2 successive AMPylation events occur on Tyr-82.

In terms of biological role, probable toxic component of a putative type VII toxin-antitoxin (TA) system, probably an RNase. Probably neutralized by cognate antitoxin MJ0435. Neutralization may be due to AMPylation by MJ0435. This is Gamma-glutamylcyclotransferase and putative RNase MJ0434 from Methanocaldococcus jannaschii (strain ATCC 43067 / DSM 2661 / JAL-1 / JCM 10045 / NBRC 100440) (Methanococcus jannaschii).